Reading from the N-terminus, the 193-residue chain is Potassium-transporting ATPase KdpC subunit (193 aa).

A helical transmembrane segment spans residues 7–27; sequence PLVVLFVILTAVTGLAYPAVM.

The protein belongs to the KdpC family. In terms of assembly, the system is composed of three essential subunits: KdpA, KdpB and KdpC.

The protein localises to the cell inner membrane. Functionally, part of the high-affinity ATP-driven potassium transport (or Kdp) system, which catalyzes the hydrolysis of ATP coupled with the electrogenic transport of potassium into the cytoplasm. This subunit acts as a catalytic chaperone that increases the ATP-binding affinity of the ATP-hydrolyzing subunit KdpB by the formation of a transient KdpB/KdpC/ATP ternary complex. In Burkholderia cenocepacia (strain ATCC BAA-245 / DSM 16553 / LMG 16656 / NCTC 13227 / J2315 / CF5610) (Burkholderia cepacia (strain J2315)), this protein is Potassium-transporting ATPase KdpC subunit.